The following is a 149-amino-acid chain: MAFHSLLLLCLAGLLFVSEAGPVAHGGEDSKCPLMVKVLDAVRGRPAVNVDVKVFKKTEKQTWELFASGKTNDNGEIHELTSDDKFGEGLYKVEFDTISYWKALGVSPFHEYADVVFTANDAGHRHYTIAAQLSPYSFSTTAIVSNPTE.

Residues 1–20 (MAFHSLLLLCLAGLLFVSEA) form the signal peptide. The residue at position 32 (cysteine 32) is a Sulfocysteine. Lysine 37 contacts L-thyroxine. Glutamate 64 bears the 4-carboxyglutamate mark. The L-thyroxine site is built by glutamate 76 and serine 139.

Belongs to the transthyretin family. In terms of assembly, homotetramer. Dimer of dimers. In the homotetramer, subunits assemble around a central channel that can accommodate two ligand molecules. Interacts with RBP4. Sulfonation of the reactive cysteine Cys-32 enhances the stability of the native conformation of TTR, avoiding misassembly of the protein leading to amyloid formation. As to expression, detected in plasma (at protein level). Detected in liver.

Its subcellular location is the secreted. Its function is as follows. Thyroid hormone-binding protein. Probably transports thyroxine from the bloodstream to the brain. The chain is Transthyretin (TTR) from Petaurus breviceps (Australian sugar glider).